Here is a 433-residue protein sequence, read N- to C-terminus: D-amino acid dehydrogenase (433 aa).

3–17 lines the FAD pocket; the sequence is VLVLGSGVIGTTSAY.

Belongs to the DadA oxidoreductase family. The cofactor is FAD.

The enzyme catalyses a D-alpha-amino acid + A + H2O = a 2-oxocarboxylate + AH2 + NH4(+). It participates in amino-acid degradation; D-alanine degradation; NH(3) and pyruvate from D-alanine: step 1/1. In terms of biological role, oxidative deamination of D-amino acids. In Pseudomonas savastanoi pv. phaseolicola (strain 1448A / Race 6) (Pseudomonas syringae pv. phaseolicola (strain 1448A / Race 6)), this protein is D-amino acid dehydrogenase.